A 514-amino-acid polypeptide reads, in one-letter code: Photosystem II CP47 reaction center protein (514 aa).

A run of 6 helical transmembrane segments spans residues 21 to 36, 109 to 123, 148 to 164, 211 to 226, 245 to 260, and 465 to 480; these read AVHLMHTALVLGWAGS, IVLSGLFFLAAVWHW, GGHLFLLGFLCFNFGTF, IAAGITLMIGGVFHLT, ALASAIAAVFGAAFVV, and CFALLFFFGHIWHGAR.

It belongs to the PsbB/PsbC family. PsbB subfamily. In terms of assembly, PSII is composed of 1 copy each of membrane proteins PsbA, PsbB, PsbC, PsbD, PsbE, PsbF, PsbH, PsbI, PsbJ, PsbK, PsbL, PsbM, PsbT, PsbX, PsbY, PsbZ, Psb30/Ycf12, peripheral proteins PsbO, CyanoQ (PsbQ), PsbU, PsbV and a large number of cofactors. It forms dimeric complexes. Requires Binds multiple chlorophylls. PSII binds additional chlorophylls, carotenoids and specific lipids. as cofactor.

It is found in the cellular thylakoid membrane. In terms of biological role, one of the components of the core complex of photosystem II (PSII). It binds chlorophyll and helps catalyze the primary light-induced photochemical processes of PSII. PSII is a light-driven water:plastoquinone oxidoreductase, using light energy to abstract electrons from H(2)O, generating O(2) and a proton gradient subsequently used for ATP formation. The protein is Photosystem II CP47 reaction center protein of Prochlorothrix hollandica.